Consider the following 235-residue polypeptide: Glucosamine-6-phosphate deaminase (235 aa).

D62 (proton acceptor; for enolization step) is an active-site residue. The active-site For ring-opening step is the N128. H130 acts as the Proton acceptor; for ring-opening step in catalysis. The active-site For ring-opening step is E135.

This sequence belongs to the glucosamine/galactosamine-6-phosphate isomerase family. NagB subfamily.

The enzyme catalyses alpha-D-glucosamine 6-phosphate + H2O = beta-D-fructose 6-phosphate + NH4(+). The protein operates within amino-sugar metabolism; N-acetylneuraminate degradation; D-fructose 6-phosphate from N-acetylneuraminate: step 5/5. Its function is as follows. Catalyzes the reversible isomerization-deamination of glucosamine 6-phosphate (GlcN6P) to form fructose 6-phosphate (Fru6P) and ammonium ion. This chain is Glucosamine-6-phosphate deaminase, found in Lactococcus lactis subsp. cremoris (strain SK11).